The following is a 261-amino-acid chain: 4-hydroxy-tetrahydrodipicolinate reductase (261 aa).

NAD(+) contacts are provided by residues glycine 13–methionine 18, glycine 91–serine 93, and alanine 115–phenylalanine 118. Histidine 149 (proton donor/acceptor) is an active-site residue. Histidine 150 lines the (S)-2,3,4,5-tetrahydrodipicolinate pocket. Lysine 153 (proton donor) is an active-site residue. A (S)-2,3,4,5-tetrahydrodipicolinate-binding site is contributed by glycine 159–threonine 160.

It belongs to the DapB family.

The protein resides in the cytoplasm. It carries out the reaction (S)-2,3,4,5-tetrahydrodipicolinate + NAD(+) + H2O = (2S,4S)-4-hydroxy-2,3,4,5-tetrahydrodipicolinate + NADH + H(+). The enzyme catalyses (S)-2,3,4,5-tetrahydrodipicolinate + NADP(+) + H2O = (2S,4S)-4-hydroxy-2,3,4,5-tetrahydrodipicolinate + NADPH + H(+). The protein operates within amino-acid biosynthesis; L-lysine biosynthesis via DAP pathway; (S)-tetrahydrodipicolinate from L-aspartate: step 4/4. Functionally, catalyzes the conversion of 4-hydroxy-tetrahydrodipicolinate (HTPA) to tetrahydrodipicolinate. The sequence is that of 4-hydroxy-tetrahydrodipicolinate reductase from Granulibacter bethesdensis (strain ATCC BAA-1260 / CGDNIH1).